Consider the following 300-residue polypeptide: Hemagglutinin 1 (300 aa).

Residues 200–221 (FIFATVVFIFLQAGRVPEIIAD) form a helical membrane-spanning segment.

It is found in the cell membrane. In terms of biological role, induces agglutination of neuraminidase-treated erythrocytes. The chain is Hemagglutinin 1 (hag1) from Eikenella corrodens.